The sequence spans 324 residues: Inhibitor of growth protein 1 homolog (324 aa).

The tract at residues 120–237 is disordered; that stretch reads AEEEKKKKKS…SSRKQKSMAA (118 aa). The segment covering 140–169 has biased composition (low complexity); sequence SSTTSSSSSSSSSSLSLSSSTNNTSSLNSS. Positions 170–186 are enriched in gly residues; it reads SGGGGGGSGGGGGGGGH. Residues 201–229 show a composition bias toward low complexity; the sequence is SLTSSSSSGNINGMSSSSSSSSSSSSLSS. The PHD-type zinc-finger motif lies at 271–320; that stretch reads PTYCFCNRVSFGEMVGCENPDCKIEWFHFECVGLTSTPKGKWYCPDCTRI. Residues C274, C276, C287, C292, H298, C301, C314, and C317 each contribute to the Zn(2+) site.

The protein belongs to the ING family. In terms of assembly, interacts with H3K4me3 and to a lesser extent with H3K4me2.

The protein resides in the nucleus. Involved in regulation of the growth and differentiation transition (GDT) process, probably by regulating gene expression via histone modification. This chain is Inhibitor of growth protein 1 homolog, found in Dictyostelium discoideum (Social amoeba).